Reading from the N-terminus, the 282-residue chain is Undecaprenyl-diphosphatase (282 aa).

The next 8 helical transmembrane spans lie at Phe2–Val22, Phe47–Tyr67, Trp90–Phe110, Leu115–Ile135, Ile152–Thr172, Phe190–Leu210, Ala225–Ile245, and Ile259–Leu279.

Belongs to the UppP family.

The protein localises to the cell membrane. The enzyme catalyses di-trans,octa-cis-undecaprenyl diphosphate + H2O = di-trans,octa-cis-undecaprenyl phosphate + phosphate + H(+). Functionally, catalyzes the dephosphorylation of undecaprenyl diphosphate (UPP). Confers resistance to bacitracin. This is Undecaprenyl-diphosphatase from Leuconostoc citreum (strain KM20).